The primary structure comprises 156 residues: Nuclear cap-binding protein subunit 2 (156 aa).

Serine 2 carries the N-acetylserine modification. A phosphoserine mark is found at serine 13 and serine 18. MRNA-binding positions include tyrosine 20, tyrosine 43, 112 to 116 (RTDWD), 123 to 127 (RQYGR), and 133 to 134 (QV). The RRM domain maps to 40–118 (CTLYVGNLSF…RIIRTDWDAG (79 aa)). Positions 124-156 (QYGRGRSGGQVRDEYREDYDAGRGGYGKLAQKQ) are disordered. Basic and acidic residues predominate over residues 134 to 144 (VRDEYREDYDA). An Omega-N-methylarginine modification is found at arginine 146.

Belongs to the RRM NCBP2 family. In terms of assembly, component of the nuclear cap-binding complex (CBC), a heterodimer composed of NCBP1/CBP80 and NCBP2/CBP20 that interacts with m7GpppG-capped RNA. Found in a U snRNA export complex with PHAX/RNUXA, NCBP1/CBP80, NCBP2/CBP20, RAN, XPO1 and m7G-capped RNA. Interacts with PHAX/RNUXA, EIF4G1, HNRNPF, HNRNPH1 and ALYREF/THOC4/ALY. Interacts with SRRT/ARS2 and KPNA3.

The protein resides in the nucleus. Its subcellular location is the cytoplasm. Its function is as follows. Component of the cap-binding complex (CBC), which binds co-transcriptionally to the 5' cap of pre-mRNAs and is involved in various processes such as pre-mRNA splicing, translation regulation, nonsense-mediated mRNA decay, RNA-mediated gene silencing (RNAi) by microRNAs (miRNAs) and mRNA export. The CBC complex is involved in mRNA export from the nucleus via its interaction with ALYREF/THOC4/ALY, leading to the recruitment of the mRNA export machinery to the 5' end of mRNA and to mRNA export in a 5' to 3' direction through the nuclear pore. The CBC complex is also involved in mediating U snRNA and intronless mRNAs export from the nucleus. The CBC complex is essential for a pioneer round of mRNA translation, before steady state translation when the CBC complex is replaced by cytoplasmic cap-binding protein eIF4E. The pioneer round of mRNA translation mediated by the CBC complex plays a central role in nonsense-mediated mRNA decay (NMD), NMD only taking place in mRNAs bound to the CBC complex, but not on eIF4E-bound mRNAs. The CBC complex enhances NMD in mRNAs containing at least one exon-junction complex (EJC) via its interaction with UPF1, promoting the interaction between UPF1 and UPF2. The CBC complex is also involved in 'failsafe' NMD, which is independent of the EJC complex, while it does not participate in Staufen-mediated mRNA decay (SMD). During cell proliferation, the CBC complex is also involved in microRNAs (miRNAs) biogenesis via its interaction with SRRT/ARS2, thereby being required for miRNA-mediated RNA interference. The CBC complex also acts as a negative regulator of PARN, thereby acting as an inhibitor of mRNA deadenylation. In the CBC complex, NCBP2/CBP20 recognizes and binds capped RNAs (m7GpppG-capped RNA) but requires NCBP1/CBP80 to stabilize the movement of its N-terminal loop and lock the CBC into a high affinity cap-binding state with the cap structure. The conventional cap-binding complex with NCBP2 binds both small nuclear RNA (snRNA) and messenger (mRNA) and is involved in their export from the nucleus. The polypeptide is Nuclear cap-binding protein subunit 2 (Ncbp2) (Mus musculus (Mouse)).